The sequence spans 237 residues: Ribosomal RNA small subunit methyltransferase G (237 aa).

S-adenosyl-L-methionine-binding positions include glycine 78, phenylalanine 83, 129 to 130 (AE), and arginine 148.

It belongs to the methyltransferase superfamily. RNA methyltransferase RsmG family.

It is found in the cytoplasm. Specifically methylates the N7 position of a guanine in 16S rRNA. In Streptococcus pyogenes serotype M4 (strain MGAS10750), this protein is Ribosomal RNA small subunit methyltransferase G.